Reading from the N-terminus, the 304-residue chain is MRLPIFLDTDPGIDDAVAIAAAIFAPELDLQLMTTVAGNVSVEKTTRNALQLLHFWNAEIPLAQGAAVPLVRAPRDAASVHGESGMAGYDFVEHNRKPLGIPAFLAIRDALMRAPEPVTLVAIGPLTNIALLLSQCPECKPYIRRLVIMGGSAGRGNCTPNAEFNIAADPEAAACVFRSGIEIVMCGLDVTNQAILTPDYLATLPELNRTGKMLHALFSHYRSGSMQSGLRMHDLCAIAWLVRPDLFTLKPCFVAVETQGEFTSGTTVVDIDGCLGKPANVKVALDLDVKGFQQWVAEVLALAS.

Residue His233 is part of the active site.

Belongs to the IUNH family. RihC subfamily.

Hydrolyzes both purine and pyrimidine ribonucleosides with a broad-substrate specificity. The polypeptide is Non-specific ribonucleoside hydrolase RihC (Escherichia coli O8 (strain IAI1)).